The primary structure comprises 365 residues: Forkhead box protein H1 (365 aa).

The tract at residues 1 to 29 is disordered; the sequence is MGPCSGSRLGPPEAESPSQPPKRRKKRYL. Residues 32 to 128 constitute a DNA-binding region (fork-head); sequence DKPPYTYLAM…ALRLQNTALC (97 aa). The interval 151-215 is disordered; it reads GRPYRPPSPP…TPPLPSSERP (65 aa). The segment covering 154 to 164 has biased composition (pro residues); the sequence is YRPPSPPPPPS. Positions 273-354 are SMAD-interaction domain (SID); that stretch reads LWGQLPTSYL…VSHPRDLAAP (82 aa). Positions 277-281 match the Fast/FoxH1 motif 1 (FM1) motif; that stretch reads LPTSY. Positions 287 to 293 match the Fast/FoxH1 motif 2 (FM2) motif; that stretch reads PNVVMPL. Residues 327-348 carry the SMAD interaction motif (SIM) motif; that stretch reads LDALFQGVPPNKSIYDVWVSHP.

As to quaternary structure, interacts with the MH2 domains of SMAD2 and SMAD3. In terms of tissue distribution, ubiquitous.

The protein resides in the nucleus. Transcriptional activator. Recognizes and binds to the DNA sequence 5'-TGT[GT][GT]ATT-3'. Required for induction of the goosecoid (GSC) promoter by TGF-beta or activin signaling. Forms a transcriptionally active complex containing FOXH1/SMAD2/SMAD4 on a site on the GSC promoter called TARE (TGF-beta/activin response element). This is Forkhead box protein H1 (FOXH1) from Homo sapiens (Human).